The sequence spans 362 residues: Very-long-chain (3R)-3-hydroxyacyl-CoA dehydratase 3 (362 aa).

Residue Met-1 is modified to N-acetylmethionine. Over 1–149 the chain is Cytoplasmic; that stretch reads METQVLTPHV…ETLTNLKKGY (149 aa). In terms of domain architecture, CS spans 5-94; it reads VLTPHVYWAQ…KGSHWWERLT (90 aa). The residue at position 7 (Thr-7) is a Phosphothreonine. Positions 111-138 form a coiled coil; that stretch reads LDESDAEMELRAKEEERLNKLRLEREGS. Residue Ser-114 is modified to Phosphoserine. Residues 150 to 170 form a helical membrane-spanning segment; sequence LFMYNLVQLLGFSWIFVNLTV. At 171–189 the chain is on the lumenal side; the sequence is RFFILGKESFYDTFHNVAD. Residues 190–210 traverse the membrane as a helical segment; the sequence is MMYFCQMLALVETLNAAIGVT. Topologically, residues 211–212 are cytoplasmic; sequence ST. Residues 213 to 233 form a helical membrane-spanning segment; that stretch reads PVLPALIQFLGRNFILFLVFG. Topologically, residues 234–242 are lumenal; that stretch reads TMEEMQNKA. The chain crosses the membrane as a helical span at residues 243–263; the sequence is VVFFVFYSWSAIEIFRYPFYM. Residues 264–280 are Cytoplasmic-facing; that stretch reads LSCIDMDWKVLTWLRYT. The chain crosses the membrane as a helical span at residues 281-301; sequence MWIPLYPLGCLSEAVAVIQSI. Catalysis depends on residues Tyr-286 and Glu-293. Residues 302–322 lie on the Lumenal side of the membrane; that stretch reads PVFNESGRFSFTLPYPVKMKV. Residues 323 to 343 form a helical membrane-spanning segment; that stretch reads RFSFFLQVYLVMLFLGLYINF. Residues 344–362 lie on the Cytoplasmic side of the membrane; the sequence is RHLYKQRRRRYGQKKKKLH.

This sequence belongs to the very long-chain fatty acids dehydratase HACD family. As to quaternary structure, may interact with enzymes of the ELO family (including ELOVL1); with those enzymes that mediate condensation, the first of the four steps of the reaction cycle responsible for fatty acids elongation, may be part of a larger fatty acids elongase complex. Interacts with RAC1. Associates with internalized insulin receptor/INSR complexes on Golgi/endosomal membranes; HACD3/PTPLAD1 together with ATIC and PRKAA2/AMPK2 is proposed to be part of a signaling network regulating INSR autophosphorylation and endocytosis.

It is found in the endoplasmic reticulum membrane. The catalysed reaction is a very-long-chain (3R)-3-hydroxyacyl-CoA = a very-long-chain (2E)-enoyl-CoA + H2O. It catalyses the reaction (3R)-hydroxyhexadecanoyl-CoA = (2E)-hexadecenoyl-CoA + H2O. The protein operates within lipid metabolism; fatty acid biosynthesis. Functionally, catalyzes the third of the four reactions of the long-chain fatty acids elongation cycle. This endoplasmic reticulum-bound enzymatic process, allows the addition of two carbons to the chain of long- and very long-chain fatty acids/VLCFAs per cycle. This enzyme catalyzes the dehydration of the 3-hydroxyacyl-CoA intermediate into trans-2,3-enoyl-CoA, within each cycle of fatty acid elongation. Thereby, it participates in the production of VLCFAs of different chain lengths that are involved in multiple biological processes as precursors of membrane lipids and lipid mediators. Involved in Rac1-signaling pathways leading to the modulation of gene expression. Promotes insulin receptor/INSR autophosphorylation and is involved in INSR internalization. The chain is Very-long-chain (3R)-3-hydroxyacyl-CoA dehydratase 3 from Mus musculus (Mouse).